A 444-amino-acid chain; its full sequence is COP9 signalosome complex subunit 2 (444 aa).

Residues 1-31 (MSDNDDDFMCDDDEDYGLEYSEDSNSEPDVD) are disordered. Residues 255–417 (AHTDFFEAFK…QVLQLDKINS (163 aa)) form the PCI domain.

The protein belongs to the CSN2 family. Component of the CSN complex, probably composed of CSN1b, alien/CSN2, CSN3, CSN4, CSN5, CSN6, CSN7 and CSN8. Interacts with Rpn6. As to expression, expressed during embryonic stages 11-14 in the muscle attachment sites (apodemes); pharynx attachment to the roof of the mouth and in the epidermis of the head for the dorsal and ventral prothoracic pharyngeal muscle attachment. From stage 16 onwards expression is seen in all thoracic and abdominal apodemes.

The protein localises to the cytoplasm. It localises to the nucleus. Functionally, component of the COP9 signalosome complex (CSN), a complex involved in various cellular and developmental processes. The CSN complex is an essential regulator of the ubiquitin (Ubl) conjugation pathway by mediating the deneddylation of the cullin subunits of the SCF-type E3 ligase complexes, leading to decrease the Ubl ligase activity of SCF. The CSN complex plays an essential role in oogenesis and embryogenesis and is required for proper photoreceptor R cell differentiation and promote lamina glial cell migration or axon targeting. It also promotes Ubl-dependent degradation of cyclin E (CycE) during early oogenesis. The polypeptide is COP9 signalosome complex subunit 2 (Drosophila melanogaster (Fruit fly)).